The chain runs to 78 residues: Disintegrin DisBa-01 (78 aa).

Residues 1 to 78 (GNELLEAGEE…AGCPRNPFHA (78 aa)) form the Disintegrin domain. Cystine bridges form between cysteine 11–cysteine 26, cysteine 13–cysteine 21, cysteine 20–cysteine 43, cysteine 34–cysteine 40, cysteine 39–cysteine 64, and cysteine 52–cysteine 71. A Cell attachment site motif is present at residues 56–58 (RGD).

Belongs to the venom metalloproteinase (M12B) family. P-II subfamily. P-IIa sub-subfamily. As to quaternary structure, monomer. As to expression, expressed by the venom gland.

It is found in the secreted. Functionally, this recombinant disintegrin antagonizes integrins alpha-IIb/beta-3 (ITGA2B/ITGB3) and alpha-V/beta-3 (ITGAV/ITGB3). On ITGA2B/ITGB3, it interferes with the outside/-in phosphorylation of the focal adhesion kinase (PTK2 / FAK) downstream of the integrin. It strongly inhibits platelet aggregation induced by ADP, thrombin, and collagen, abolishes and reverses dynamic platelet recruitment to immobilized fibrinogen. In vivo, it induces a dramatic increase in the tail bleeding time, and has a strong antithrombotic activity. On ITGAV/ITGB3, it inhibits the adhesion of ITGAV/ITGB3-expressing human microvascular endothelial cell line and murine melanoma cell line to vitronectin (IC(50) are 555 nM and 225 nM, respectively), and transiently inhibits their proliferation without direct cell toxicity. In vivo, it potently inhibits angiogenesis and metastasis, probably due to its capability to strongly inhibit the expression of VEGF and its receptors in endothelial cells. It also inhibits tumor cell migration in vitro. The sequence is that of Disintegrin DisBa-01 from Bothrops alternatus (Urutu).